A 186-amino-acid polypeptide reads, in one-letter code: MCVYIVAGLGNPGPSYDKTRHNVGQMVLDILSGGARFRRHKTNNFYLSLGDILLVKPDAYMNLSGPVIASLMKFHSVSDLLVLHDDIDLPLGTLRFKQGGGTAGHRGLRSISDCLGSDYARLRVGIGRPENNQSIEDFVLSNFSPVQTDIISRTIQLAAEAVLHLRDNGFVGVKQFIAQTKLPSRT.

TRNA is bound at residue Tyr16. The Proton acceptor role is filled by His21. Tyr60 and Asn62 together coordinate tRNA.

This sequence belongs to the PTH family. Monomer.

The protein localises to the cytoplasm. It carries out the reaction an N-acyl-L-alpha-aminoacyl-tRNA + H2O = an N-acyl-L-amino acid + a tRNA + H(+). Hydrolyzes ribosome-free peptidyl-tRNAs (with 1 or more amino acids incorporated), which drop off the ribosome during protein synthesis, or as a result of ribosome stalling. In terms of biological role, catalyzes the release of premature peptidyl moieties from peptidyl-tRNA molecules trapped in stalled 50S ribosomal subunits, and thus maintains levels of free tRNAs and 50S ribosomes. The polypeptide is Peptidyl-tRNA hydrolase (Tropheryma whipplei (strain Twist) (Whipple's bacillus)).